Consider the following 119-residue polypeptide: Glucitol operon activator protein (119 aa).

Residues 23–29 (QISRFNR) constitute a DNA-binding region (H-T-H motif).

Positive regulator for glucitol operon expression. The protein is Glucitol operon activator protein (gutM) of Escherichia coli (strain K12).